Here is a 148-residue protein sequence, read N- to C-terminus: UPF0260 protein Sfri_1740 (148 aa).

The protein belongs to the UPF0260 family.

In Shewanella frigidimarina (strain NCIMB 400), this protein is UPF0260 protein Sfri_1740.